The sequence spans 175 residues: Transcriptional regulator GadE (175 aa).

One can recognise an HTH luxR-type domain in the interval 109–174 (HKNSQLCFSH…DIVTLGITSY (66 aa)). Positions 133–152 (ESNITSTLNISQQTLKIQKF) form a DNA-binding region, H-T-H motif.

Its function is as follows. Regulates the expression of several genes involved in acid resistance. Required for the expression of gadA and gadBC, among others, regardless of media or growth conditions. Binds directly to the 20 bp GAD box found in the control regions of both loci. Could be involved in the regulation of the genes coding for the type III secretion system in enterohaemorragic strains. This is Transcriptional regulator GadE (gadE) from Escherichia coli O157:H7.